We begin with the raw amino-acid sequence, 77 residues long: SS18-like protein 2 (77 aa).

The SH2-binding motif lies at 50–53 (YQHV).

This sequence belongs to the SS18 family.

The sequence is that of SS18-like protein 2 (SS18L2) from Homo sapiens (Human).